Consider the following 288-residue polypeptide: Alpha/beta hydrolase domain-containing protein 17B (288 aa).

Residues S170, D235, and H264 each act as charge relay system in the active site.

This sequence belongs to the AB hydrolase superfamily. ABHD17 family. Palmitoylated on cysteine residues located in a cysteine cluster at the N-terminus which promotes membrane localization.

It localises to the cell membrane. It is found in the recycling endosome membrane. The protein resides in the cell projection. The protein localises to the dendritic spine. Its subcellular location is the postsynaptic density membrane. The enzyme catalyses S-hexadecanoyl-L-cysteinyl-[protein] + H2O = L-cysteinyl-[protein] + hexadecanoate + H(+). Hydrolyzes fatty acids from S-acylated cysteine residues in proteins. This Xenopus tropicalis (Western clawed frog) protein is Alpha/beta hydrolase domain-containing protein 17B.